Reading from the N-terminus, the 454-residue chain is MKKLFGTDGVRGVANVYPMTAEMAMQIGRAAAYIFKNGKKRHRIVIGKDTRLSGYMLESALMAGICSMGVDVLLVGPLPTPGIANITSSMRADAGVVISASHNPFEDNGIKFFSRDGFKLPDETELMMEELIFSKRIDSLRPTAKEVGKAYRIDDAQGRFVVFLKSTFPKDLDLSGLKIVLDCANGAAYKVAPAVFEELGAEVISIGVKPNGTNINADCGSLHPEVMSQAVKEHGADLGVALDGDADRVIFVDEYGNVVDGDRIMAICATEMIRQGILKQNTLVATVMSNMGLDIAMKRAGGQVIKTAVGDRYVVEEMLKGGYNLGGEQSGHMIFLDHNTTGDGVLSALQVLAIMQRHQKRLSELALVMEPLPQVLVNVRLAEKSDIMQVPEIAKLINDVEEKLKGEGRVLIRYSGTEPLLRIMLEGSDEGDIRCWANDIASIVAQKLGGEARG.

Catalysis depends on S101, which acts as the Phosphoserine intermediate. Residues S101, D243, D245, and D247 each coordinate Mg(2+). S101 is subject to Phosphoserine.

The protein belongs to the phosphohexose mutase family. It depends on Mg(2+) as a cofactor. In terms of processing, activated by phosphorylation.

The catalysed reaction is alpha-D-glucosamine 1-phosphate = D-glucosamine 6-phosphate. Functionally, catalyzes the conversion of glucosamine-6-phosphate to glucosamine-1-phosphate. The polypeptide is Phosphoglucosamine mutase (Citrifermentans bemidjiense (strain ATCC BAA-1014 / DSM 16622 / JCM 12645 / Bem) (Geobacter bemidjiensis)).